We begin with the raw amino-acid sequence, 293 residues long: Phosphate import ATP-binding protein PstB (293 aa).

The ABC transporter domain maps to 46-288; that stretch reads FGIRGVDVFY…PDHELTEAYI (243 aa). 78–85 lines the ATP pocket; the sequence is GPSGCGKS.

Belongs to the ABC transporter superfamily. Phosphate importer (TC 3.A.1.7) family. As to quaternary structure, the complex is composed of two ATP-binding proteins (PstB), two transmembrane proteins (PstC and PstA) and a solute-binding protein (PstS).

It is found in the cell inner membrane. The enzyme catalyses phosphate(out) + ATP + H2O = ADP + 2 phosphate(in) + H(+). Part of the ABC transporter complex PstSACB involved in phosphate import. Responsible for energy coupling to the transport system. The polypeptide is Phosphate import ATP-binding protein PstB (Saccharophagus degradans (strain 2-40 / ATCC 43961 / DSM 17024)).